The chain runs to 231 residues: 7-cyano-7-deazaguanine synthase (231 aa).

11 to 21 (LSGGLDSATTM) contributes to the ATP binding site. Zn(2+) contacts are provided by Cys-195, Cys-205, Cys-208, and Cys-211.

This sequence belongs to the QueC family. Requires Zn(2+) as cofactor.

It carries out the reaction 7-carboxy-7-deazaguanine + NH4(+) + ATP = 7-cyano-7-deazaguanine + ADP + phosphate + H2O + H(+). It participates in purine metabolism; 7-cyano-7-deazaguanine biosynthesis. In terms of biological role, catalyzes the ATP-dependent conversion of 7-carboxy-7-deazaguanine (CDG) to 7-cyano-7-deazaguanine (preQ(0)). This is 7-cyano-7-deazaguanine synthase from Syntrophus aciditrophicus (strain SB).